We begin with the raw amino-acid sequence, 87 residues long: Large ribosomal subunit protein bL27 (87 aa).

Residues 1 to 11 (MASKASGGSTR) are compositionally biased toward polar residues. A disordered region spans residues 1 to 21 (MASKASGGSTRNGRDSNSKRL).

The protein belongs to the bacterial ribosomal protein bL27 family.

This chain is Large ribosomal subunit protein bL27, found in Hydrogenobaculum sp. (strain Y04AAS1).